A 294-amino-acid chain; its full sequence is 1D-myo-inositol 2-acetamido-2-deoxy-alpha-D-glucopyranoside deacetylase (294 aa).

3 residues coordinate Zn(2+): His-13, Asp-16, and His-148.

The protein belongs to the MshB deacetylase family. Zn(2+) is required as a cofactor.

The enzyme catalyses 1D-myo-inositol 2-acetamido-2-deoxy-alpha-D-glucopyranoside + H2O = 1D-myo-inositol 2-amino-2-deoxy-alpha-D-glucopyranoside + acetate. In terms of biological role, catalyzes the deacetylation of 1D-myo-inositol 2-acetamido-2-deoxy-alpha-D-glucopyranoside (GlcNAc-Ins) in the mycothiol biosynthesis pathway. The chain is 1D-myo-inositol 2-acetamido-2-deoxy-alpha-D-glucopyranoside deacetylase from Geodermatophilus obscurus (strain ATCC 25078 / DSM 43160 / JCM 3152 / CCUG 61914 / KCC A-0152 / KCTC 9177 / NBRC 13315 / NRRL B-3577 / G-20).